Consider the following 324-residue polypeptide: tRNA pseudouridine synthase B (324 aa).

D49 (nucleophile) is an active-site residue.

The protein belongs to the pseudouridine synthase TruB family. Type 1 subfamily.

It catalyses the reaction uridine(55) in tRNA = pseudouridine(55) in tRNA. Responsible for synthesis of pseudouridine from uracil-55 in the psi GC loop of transfer RNAs. This Tolumonas auensis (strain DSM 9187 / NBRC 110442 / TA 4) protein is tRNA pseudouridine synthase B.